The chain runs to 37 residues: Large ribosomal subunit protein bL36 (37 aa).

Belongs to the bacterial ribosomal protein bL36 family.

The protein is Large ribosomal subunit protein bL36 of Aliivibrio fischeri (strain ATCC 700601 / ES114) (Vibrio fischeri).